The following is a 759-amino-acid chain: 1,4-alpha-glucan branching enzyme GlgB (759 aa).

The Nucleophile role is filled by D431. Residue E484 is the Proton donor of the active site.

It belongs to the glycosyl hydrolase 13 family. GlgB subfamily. Monomer.

It catalyses the reaction Transfers a segment of a (1-&gt;4)-alpha-D-glucan chain to a primary hydroxy group in a similar glucan chain.. Its pathway is glycan biosynthesis; glycogen biosynthesis. In terms of biological role, catalyzes the formation of the alpha-1,6-glucosidic linkages in glycogen by scission of a 1,4-alpha-linked oligosaccharide from growing alpha-1,4-glucan chains and the subsequent attachment of the oligosaccharide to the alpha-1,6 position. In Prochlorococcus marinus (strain MIT 9211), this protein is 1,4-alpha-glucan branching enzyme GlgB.